We begin with the raw amino-acid sequence, 152 residues long: Phospholipase A2 pkP2 (152 aa).

The signal sequence occupies residues 1–21 (MNPAHLLVLLAVCVSLLGASA). Positions 22-27 (IPPLPL) are excised as a propeptide. 7 disulfide bridges follow: cysteine 38-cysteine 104, cysteine 54-cysteine 151, cysteine 56-cysteine 72, cysteine 71-cysteine 132, cysteine 78-cysteine 125, cysteine 88-cysteine 118, and cysteine 111-cysteine 123. Residues tyrosine 55, glycine 57, and glycine 59 each coordinate Ca(2+). Histidine 75 is an active-site residue. Aspartate 76 is a binding site for Ca(2+). Residue aspartate 126 is part of the active site.

Belongs to the phospholipase A2 family. Group I subfamily. The cofactor is Ca(2+).

The protein localises to the secreted. It catalyses the reaction a 1,2-diacyl-sn-glycero-3-phosphocholine + H2O = a 1-acyl-sn-glycero-3-phosphocholine + a fatty acid + H(+). PA2 catalyzes the calcium-dependent hydrolysis of the 2-acyl groups in 3-sn-phosphoglycerides. This Laticauda semifasciata (Black-banded sea krait) protein is Phospholipase A2 pkP2.